Reading from the N-terminus, the 343-residue chain is Heat-inducible transcription repressor HrcA (343 aa).

This sequence belongs to the HrcA family.

Its function is as follows. Negative regulator of class I heat shock genes (grpE-dnaK-dnaJ and groELS operons). Prevents heat-shock induction of these operons. This chain is Heat-inducible transcription repressor HrcA, found in Leptospira biflexa serovar Patoc (strain Patoc 1 / Ames).